Consider the following 165-residue polypeptide: Cytochrome c-type biogenesis protein CcmE (165 aa).

Topologically, residues 1-29 (MSATAEQNARNPKGKGGFARTVSQRKRKR) are cytoplasmic. Residues 30–50 (LFLIGGALAVLAVAVGLMLTA) traverse the membrane as a helical; Signal-anchor for type II membrane protein segment. The Periplasmic segment spans residues 51–165 (FNQDIRFFRT…LKKKGVWEGK (115 aa)). Positions 143 and 147 each coordinate heme.

This sequence belongs to the CcmE/CycJ family.

It localises to the cell inner membrane. Functionally, heme chaperone required for the biogenesis of c-type cytochromes. Transiently binds heme delivered by CcmC and transfers the heme to apo-cytochromes in a process facilitated by CcmF and CcmH. The protein is Cytochrome c-type biogenesis protein CcmE of Brucella canis (strain ATCC 23365 / NCTC 10854 / RM-666).